The chain runs to 850 residues: DEAD-box ATP-dependent RNA helicase 26 (850 aa).

Disordered stretches follow at residues 60–82 (TRPE…IRAS) and 106–350 (GKFT…ENDE). The span at 61–71 (RPERSQPEFAR) shows a compositional bias: basic and acidic residues. Residue Thr109 is modified to Phosphothreonine. Ser110 carries the post-translational modification Phosphoserine. 2 stretches are compositionally biased toward basic and acidic residues: residues 118–140 (EVVR…EGQS) and 284–299 (GRND…REPG). Composition is skewed to acidic residues over residues 315-325 (LEEEDSSDDDE) and 336-350 (LPSE…ENDE). The Q motif motif lies at 382-410 (TRFDQFPLSPLSLKAIKDAGFETMTVVQE). One can recognise a Helicase ATP-binding domain in the interval 413 to 596 (LPIILQGKDV…HVALKRDHEF (184 aa)). An ATP-binding site is contributed by 426–433 (AKTGTGKT). Residues 544–547 (DEAD) carry the DEAD box motif. A Helicase C-terminal domain is found at 630–777 (LLKEHIADNV…IDPEAVKRVQ (148 aa)).

The protein belongs to the DEAD box helicase family.

The catalysed reaction is ATP + H2O = ADP + phosphate + H(+). The chain is DEAD-box ATP-dependent RNA helicase 26 (RH26) from Arabidopsis thaliana (Mouse-ear cress).